We begin with the raw amino-acid sequence, 83 residues long: Small ribosomal subunit protein bS20 (83 aa).

It belongs to the bacterial ribosomal protein bS20 family.

Binds directly to 16S ribosomal RNA. The sequence is that of Small ribosomal subunit protein bS20 from Flavobacterium johnsoniae (strain ATCC 17061 / DSM 2064 / JCM 8514 / BCRC 14874 / CCUG 350202 / NBRC 14942 / NCIMB 11054 / UW101) (Cytophaga johnsonae).